A 191-amino-acid polypeptide reads, in one-letter code: dCTP deaminase (191 aa).

Residues 112–117 (KSTYAR), 136–138 (TLE), Gln157, Tyr173, and Gln183 contribute to the dCTP site. Residue Glu138 is the Proton donor/acceptor of the active site.

It belongs to the dCTP deaminase family. As to quaternary structure, homotrimer.

It catalyses the reaction dCTP + H2O + H(+) = dUTP + NH4(+). The protein operates within pyrimidine metabolism; dUMP biosynthesis; dUMP from dCTP (dUTP route): step 1/2. Its function is as follows. Catalyzes the deamination of dCTP to dUTP. This is dCTP deaminase from Psychrobacter sp. (strain PRwf-1).